The sequence spans 257 residues: Acetylglutamate kinase (257 aa).

Substrate is bound by residues 43-44 (GG), Arg-65, and Asn-157. Residues 180 to 185 (DVSGIL) and 208 to 210 (IIT) contribute to the ATP site.

Belongs to the acetylglutamate kinase family. ArgB subfamily. In terms of assembly, homodimer.

Its subcellular location is the cytoplasm. The catalysed reaction is N-acetyl-L-glutamate + ATP = N-acetyl-L-glutamyl 5-phosphate + ADP. Its pathway is amino-acid biosynthesis; L-arginine biosynthesis; N(2)-acetyl-L-ornithine from L-glutamate: step 2/4. Catalyzes the ATP-dependent phosphorylation of N-acetyl-L-glutamate. The polypeptide is Acetylglutamate kinase (Salmonella paratyphi B (strain ATCC BAA-1250 / SPB7)).